A 2323-amino-acid chain; its full sequence is C2 domain-containing protein 3 (2323 aa).

Disordered regions lie at residues M1–T27, R193–G215, W402–D426, S444–A509, P537–P556, and K698–T745. The segment covering E200–P209 has biased composition (polar residues). S453 carries the post-translational modification Phosphoserine. The segment covering K474–Q483 has biased composition (basic and acidic residues). Residues P504–S663 form the C2 1 domain. Over residues K698–N735 the composition is skewed to polar residues. S713 carries the post-translational modification Phosphoserine. 4 consecutive C2 domains span residues S771 to L903, Q969 to D1131, S1155 to Y1323, and K1383 to I1517. Residues E1550 to D1574 show a composition bias toward basic and acidic residues. Disordered regions lie at residues E1550–A1599 and L1798–H1824. The segment covering L1584–A1599 has biased composition (polar residues). The 129-residue stretch at A1598 to Y1726 folds into the C2 6 domain. S1871 carries the phosphoserine modification. 5 disordered regions span residues F1891 to D1918, A1952 to L2013, S2074 to W2163, S2182 to T2231, and S2261 to T2323. Residues S1892–E1904 show a composition bias toward low complexity. Polar residues-rich tracts occupy residues A1952 to V1965 and S2074 to E2083. A compositionally biased stretch (low complexity) spans A2110–V2125. A compositionally biased stretch (polar residues) spans P2147 to S2158. Low complexity predominate over residues S2182 to E2197. Basic and acidic residues predominate over residues S2207 to P2216. The span at Q2222–T2231 shows a compositional bias: polar residues.

Interacts with OFD1; OFD1 may act as a negative regulator of C2CD3. Associates with the BBSome complex. Interacts with IFT88, BBS4 and PCM1.

It localises to the cytoplasm. The protein resides in the cytoskeleton. It is found in the cilium basal body. The protein localises to the microtubule organizing center. Its subcellular location is the centrosome. It localises to the centriole. Its function is as follows. Component of the centrioles that acts as a positive regulator of centriole elongation. Promotes assembly of centriolar distal appendage, a structure at the distal end of the mother centriole that acts as an anchor of the cilium, and is required for recruitment of centriolar distal appendages proteins CEP83, SCLT1, CEP89, FBF1 and CEP164. Not required for centriolar satellite integrity or RAB8 activation. Required for primary cilium formation. Required for sonic hedgehog/SHH signaling and for proteolytic processing of GLI3. The polypeptide is C2 domain-containing protein 3 (C2cd3) (Mus musculus (Mouse)).